We begin with the raw amino-acid sequence, 297 residues long: Probable porphobilinogen deaminase (297 aa).

The residue at position 241 (C241) is an S-(dipyrrolylmethanemethyl)cysteine.

The protein belongs to the HMBS family. It depends on dipyrromethane as a cofactor.

The enzyme catalyses 4 porphobilinogen + H2O = hydroxymethylbilane + 4 NH4(+). Its pathway is porphyrin-containing compound metabolism; protoporphyrin-IX biosynthesis; coproporphyrinogen-III from 5-aminolevulinate: step 2/4. In terms of biological role, tetrapolymerization of the monopyrrole PBG into the hydroxymethylbilane pre-uroporphyrinogen in several discrete steps. The sequence is that of Probable porphobilinogen deaminase from Pyrobaculum arsenaticum (strain DSM 13514 / JCM 11321 / PZ6).